The chain runs to 396 residues: Phosphoglycerate kinase (396 aa).

Residues 21 to 23 (DLN), arginine 36, 59 to 62 (HFGR), arginine 118, and arginine 151 contribute to the substrate site. Residues lysine 201, glutamate 323, and 353-356 (GGDT) each bind ATP.

This sequence belongs to the phosphoglycerate kinase family. As to quaternary structure, monomer.

The protein localises to the cytoplasm. The enzyme catalyses (2R)-3-phosphoglycerate + ATP = (2R)-3-phospho-glyceroyl phosphate + ADP. It participates in carbohydrate degradation; glycolysis; pyruvate from D-glyceraldehyde 3-phosphate: step 2/5. This chain is Phosphoglycerate kinase, found in Brucella abortus biovar 1 (strain 9-941).